The sequence spans 425 residues: Enolase (425 aa).

Position 162 (glutamine 162) interacts with (2R)-2-phosphoglycerate. Catalysis depends on glutamate 204, which acts as the Proton donor. Aspartate 241, glutamate 284, and aspartate 311 together coordinate Mg(2+). The (2R)-2-phosphoglycerate site is built by lysine 336, arginine 365, serine 366, and lysine 387. The active-site Proton acceptor is lysine 336.

This sequence belongs to the enolase family. It depends on Mg(2+) as a cofactor.

Its subcellular location is the cytoplasm. It is found in the secreted. The protein localises to the cell surface. The enzyme catalyses (2R)-2-phosphoglycerate = phosphoenolpyruvate + H2O. It functions in the pathway carbohydrate degradation; glycolysis; pyruvate from D-glyceraldehyde 3-phosphate: step 4/5. Catalyzes the reversible conversion of 2-phosphoglycerate (2-PG) into phosphoenolpyruvate (PEP). It is essential for the degradation of carbohydrates via glycolysis. The protein is Enolase of Brucella melitensis biotype 2 (strain ATCC 23457).